Consider the following 854-residue polypeptide: pH-response regulator protein palA/prr-1 (854 aa).

Residues 5 to 402 enclose the BRO1 domain; it reads HVLSLPFRKS…SELESMTSQL (398 aa). Positions 632–699 form a coiled coil; sequence RLDRLYESEL…DAAYYKYKEI (68 aa). 2 disordered regions span residues 739–782 and 801–854; these read EEEI…EPIQ and PQQQ…IRFG. Over residues 746 to 759 the composition is skewed to polar residues; that stretch reads PLSSLNMHQSSFSY. Residues 767-782 are compositionally biased toward pro residues; that stretch reads QPPPPPPQIPFPEPIQ. The span at 827–839 shows a compositional bias: low complexity; sequence QGQQHQQEQGQPG.

Belongs to the palA/RIM20 family. As to quaternary structure, interacts with pacc-1 by binding to its two YPX[LI] motifs.

Functionally, required for the proteolytic cleavage of the transcription factor pacc-1 in response to alkaline ambient pH. May act as a scaffold protein that recruits the calpain-like protease palB/cpr-8 via snf7/vps-3 to its substrate pacc-1. This Neurospora crassa (strain ATCC 24698 / 74-OR23-1A / CBS 708.71 / DSM 1257 / FGSC 987) protein is pH-response regulator protein palA/prr-1 (prr-1).